The sequence spans 134 residues: kinetoplast-associated protein 3 (134 aa).

The propeptide occupies 1-10 (MLRRSPTLLR). Residues 106–124 (PKAPKAAKSASSKVKTAAK) are compositionally biased toward low complexity. Residues 106-134 (PKAPKAAKSASSKVKTAAKTAKKTTAARK) form a disordered region. Positions 125 to 134 (TAKKTTAARK) are enriched in basic residues.

The protein belongs to the KAP family. In terms of assembly, associates with the kinetoplast DNA network.

Its subcellular location is the mitochondrion matrix. It localises to the kinetoplast. Histone H1-like DNA-binding protein involved in the organization and segregation of kinetoplast DNA (kDNA). The mitochondrial DNA of kinetoplastid protozoa consists of about 5,000 minicircles and 20 to 30 maxicircles. These circular DNAs are held together by catenation into a highly organized compact disk structure referred to as a kinetoplast DNA (kDNA) network. Binds preferentially to a specific fragment of minicircle DNA and is able to compact kDNA networks through DNA charge neutralization and condensation. The chain is kinetoplast-associated protein 3 (KAP3) from Crithidia fasciculata.